We begin with the raw amino-acid sequence, 413 residues long: Hibernation-specific plasma protein HP-55 (413 aa).

Positions 1 to 24 are cleaved as a signal peptide; the sequence is MPSSISWGLLLLAALSCLGPGSLA. A Pyrrolidone carboxylic acid modification is found at Gln25. Residues Asn65, Asn102, Asn165, and Asn266 are each glycosylated (N-linked (GlcNAc...) asparagine). The segment at 368–387 is RCL; sequence GGTVLGAEAMLQAPIMKFDR.

Belongs to the serpin family. As to quaternary structure, plasma proteins HP-20, HP-25, HP-27 and HP-55 form a 140 kDa complex via disulfide bonds in the plasma. Post-translationally, the N-terminus is blocked. As to expression, plasma; synthesized in the liver.

The protein resides in the secreted. Functionally, protease inhibitor. The protein is Hibernation-specific plasma protein HP-55 of Tamias sibiricus (Siberian chipmunk).